We begin with the raw amino-acid sequence, 492 residues long: Ketol-acid reductoisomerase (NADP(+)) (492 aa).

In terms of domain architecture, KARI N-terminal Rossmann spans 14–208 (LDQLGKCRFM…GGHRAGVLQS (195 aa)). NADP(+) contacts are provided by residues 45 to 48 (CGAQ), Arg-68, Arg-76, Ser-78, and 108 to 110 (DKQ). His-132 is a catalytic residue. Gly-158 serves as a coordination point for NADP(+). KARI C-terminal knotted domains follow at residues 209 to 344 (SFVA…NAPQ) and 345 to 485 (FDGK…MKDM). Mg(2+)-binding residues include Asp-217, Glu-221, Glu-389, and Glu-393. Residue Ser-414 participates in substrate binding.

It belongs to the ketol-acid reductoisomerase family. Mg(2+) is required as a cofactor.

The catalysed reaction is (2R)-2,3-dihydroxy-3-methylbutanoate + NADP(+) = (2S)-2-acetolactate + NADPH + H(+). It catalyses the reaction (2R,3R)-2,3-dihydroxy-3-methylpentanoate + NADP(+) = (S)-2-ethyl-2-hydroxy-3-oxobutanoate + NADPH + H(+). It functions in the pathway amino-acid biosynthesis; L-isoleucine biosynthesis; L-isoleucine from 2-oxobutanoate: step 2/4. Its pathway is amino-acid biosynthesis; L-valine biosynthesis; L-valine from pyruvate: step 2/4. In terms of biological role, involved in the biosynthesis of branched-chain amino acids (BCAA). Catalyzes an alkyl-migration followed by a ketol-acid reduction of (S)-2-acetolactate (S2AL) to yield (R)-2,3-dihydroxy-isovalerate. In the isomerase reaction, S2AL is rearranged via a Mg-dependent methyl migration to produce 3-hydroxy-3-methyl-2-ketobutyrate (HMKB). In the reductase reaction, this 2-ketoacid undergoes a metal-dependent reduction by NADPH to yield (R)-2,3-dihydroxy-isovalerate. The protein is Ketol-acid reductoisomerase (NADP(+)) of Pectobacterium carotovorum subsp. carotovorum (strain PC1).